We begin with the raw amino-acid sequence, 179 residues long: MVRDKMGKKITGLLDGDRVIVFDKNGISKLSARHYGNVEGNFLSLSLVEALYLINLGWLEVKYKDNKPLSFEELYEYARNVEERLCLKYLVYKDLRTRGYIVKTGLKYGADFRLYERGANIDKEHSVYLVKVFPEDSSFLLSELTGFVRVAHSVRKKLLIAIVDADGDIVYYNMTYVKP.

Active-site residues include Tyr115, His125, and Lys156.

This sequence belongs to the tRNA-intron endonuclease family. Archaeal short subfamily. Homotetramer; although the tetramer contains four active sites, only two participate in the cleavage. Therefore, it should be considered as a dimer of dimers.

It carries out the reaction pretRNA = a 3'-half-tRNA molecule with a 5'-OH end + a 5'-half-tRNA molecule with a 2',3'-cyclic phosphate end + an intron with a 2',3'-cyclic phosphate and a 5'-hydroxyl terminus.. In terms of biological role, endonuclease that removes tRNA introns. Cleaves pre-tRNA at the 5'- and 3'-splice sites to release the intron. The products are an intron and two tRNA half-molecules bearing 2',3' cyclic phosphate and 5'-OH termini. Recognizes a pseudosymmetric substrate in which 2 bulged loops of 3 bases are separated by a stem of 4 bp. In Methanocaldococcus jannaschii (strain ATCC 43067 / DSM 2661 / JAL-1 / JCM 10045 / NBRC 100440) (Methanococcus jannaschii), this protein is tRNA-splicing endonuclease (endA).